The chain runs to 447 residues: Cysteine--tRNA ligase (447 aa).

Position 28 (Cys-28) interacts with Zn(2+). The short motif at 30–40 is the 'HIGH' region element; it reads PTVYNYIHVGN. Residues Cys-211, His-236, and Glu-240 each coordinate Zn(2+). The 'KMSKS' region motif lies at 268–272; that stretch reads KMSKS. Lys-271 contacts ATP.

The protein belongs to the class-I aminoacyl-tRNA synthetase family. In terms of assembly, monomer. It depends on Zn(2+) as a cofactor.

It is found in the cytoplasm. The enzyme catalyses tRNA(Cys) + L-cysteine + ATP = L-cysteinyl-tRNA(Cys) + AMP + diphosphate. In Streptococcus pneumoniae serotype 4 (strain ATCC BAA-334 / TIGR4), this protein is Cysteine--tRNA ligase.